Consider the following 618-residue polypeptide: Serine--tRNA ligase, cytoplasmic (618 aa).

Position 417 to 419 (T417 to E419) interacts with L-serine. Residue R448–E450 participates in ATP binding. E472 contributes to the L-serine binding site. E536–S539 serves as a coordination point for ATP. Position 570 (S570) interacts with L-serine.

The protein belongs to the class-II aminoacyl-tRNA synthetase family. Type-1 seryl-tRNA synthetase subfamily. In terms of assembly, homodimer. The tRNA molecule binds across the dimer.

It is found in the cytoplasm. It catalyses the reaction tRNA(Ser) + L-serine + ATP = L-seryl-tRNA(Ser) + AMP + diphosphate + H(+). The catalysed reaction is tRNA(Sec) + L-serine + ATP = L-seryl-tRNA(Sec) + AMP + diphosphate + H(+). It participates in aminoacyl-tRNA biosynthesis; selenocysteinyl-tRNA(Sec) biosynthesis; L-seryl-tRNA(Sec) from L-serine and tRNA(Sec): step 1/1. Its function is as follows. Catalyzes the attachment of serine to tRNA(Ser). Is also able to aminoacylate tRNA(Sec) with serine, to form the misacylated tRNA L-seryl-tRNA(Sec), which will be further converted into selenocysteinyl-tRNA(Sec). This chain is Serine--tRNA ligase, cytoplasmic, found in Plasmodium falciparum (isolate 3D7).